Consider the following 174-residue polypeptide: Endoribonuclease YbeY (174 aa).

Zn(2+)-binding residues include H124, H128, and H134.

The protein belongs to the endoribonuclease YbeY family. Requires Zn(2+) as cofactor.

It localises to the cytoplasm. In terms of biological role, single strand-specific metallo-endoribonuclease involved in late-stage 70S ribosome quality control and in maturation of the 3' terminus of the 16S rRNA. The protein is Endoribonuclease YbeY of Synechococcus elongatus (strain ATCC 33912 / PCC 7942 / FACHB-805) (Anacystis nidulans R2).